Here is a 261-residue protein sequence, read N- to C-terminus: 5'-nucleotidase SurE (261 aa).

A divalent metal cation contacts are provided by aspartate 8, aspartate 9, serine 43, and asparagine 96.

It belongs to the SurE nucleotidase family. The cofactor is a divalent metal cation.

It localises to the cytoplasm. The catalysed reaction is a ribonucleoside 5'-phosphate + H2O = a ribonucleoside + phosphate. In terms of biological role, nucleotidase that shows phosphatase activity on nucleoside 5'-monophosphates. In Roseobacter denitrificans (strain ATCC 33942 / OCh 114) (Erythrobacter sp. (strain OCh 114)), this protein is 5'-nucleotidase SurE.